The following is a 593-amino-acid chain: Glutamate decarboxylase 1 (593 aa).

Positions 1–12 (MASSTPSPATSS) are enriched in low complexity. Residues 1–22 (MASSTPSPATSSNAGADPNTTN) form a disordered region. At S77 the chain carries Phosphoserine. 4-aminobutanoate is bound at residue 189–191 (QLS). Position 404 is an N6-(pyridoxal phosphate)lysine (K404). R566 lines the 4-aminobutanoate pocket.

This sequence belongs to the group II decarboxylase family. In terms of assembly, homodimer. Pyridoxal 5'-phosphate serves as cofactor. As to expression, expressed in brain and pancreatic islets.

It catalyses the reaction L-glutamate + H(+) = 4-aminobutanoate + CO2. Functionally, catalyzes the synthesis of the inhibitory neurotransmitter gamma-aminobutyric acid (GABA) with pyridoxal 5'-phosphate as cofactor. This Rattus norvegicus (Rat) protein is Glutamate decarboxylase 1 (Gad1).